The chain runs to 647 residues: Neutral endopeptidase (647 aa).

Residues 1-647 form the Peptidase M13 domain; sequence MRRYLAVRGG…LDPEDRITIW (647 aa). His496 serves as a coordination point for Zn(2+). Glu497 is an active-site residue. The Zn(2+) site is built by His500 and Glu556. Catalysis depends on Asp560, which acts as the Proton donor.

Belongs to the peptidase M13 family. The cofactor is Zn(2+).

The sequence is that of Neutral endopeptidase (pepO) from Lactobacillus helveticus (Lactobacillus suntoryeus).